We begin with the raw amino-acid sequence, 121 residues long: Cytochrome c2 iso-2 (121 aa).

Residues cysteine 15, cysteine 18, histidine 19, and methionine 98 each coordinate heme c.

It belongs to the cytochrome c family. In terms of processing, binds 1 heme c group covalently per subunit.

In terms of biological role, cytochrome c2 is found mainly in purple, non-sulfur, photosynthetic bacteria where it functions as the electron donor to the oxidized bacteriochlorophyll in the photophosphorylation pathway. However, it may also have a role in the respiratory chain and is found in some non-photosynthetic bacteria. This chain is Cytochrome c2 iso-2, found in Rhodospirillum centenum (Rhodocista centenaria).